A 344-amino-acid polypeptide reads, in one-letter code: Lipase chaperone (344 aa).

Residues 14–34 (AVVYGVVGLAAIAGVAMWSGA) traverse the membrane as a helical segment. The disordered stretch occupies residues 39–78 (ATGASGESPEASVAGGSVTAPPQAAVPASTGLPPSLAGSS).

Belongs to the lipase chaperone family.

Its subcellular location is the cell inner membrane. Functionally, may be involved in the folding of the extracellular lipase during its passage through the periplasm. This is Lipase chaperone (lifO) from Pseudomonas sp. (strain KWI-56).